Here is a 506-residue protein sequence, read N- to C-terminus: Notoamide biosynthesis cluster transcriptional coactivator notQ' (506 aa).

The segment at residues 11–38 is a DNA-binding region (zn(2)-C6 fungal-type); that stretch reads CLVCRHRKVACDRGRPQCGLCRKNGFDC. The tract at residues 73 to 102 is disordered; that stretch reads GRLSQSQPSQPATERDDLATTPSTGRLAPP. Residues 75–84 are compositionally biased toward polar residues; sequence LSQSQPSQPA.

It is found in the nucleus. Transcription factor that probably regulates the expression of the gene cluster that mediates the biosynthesis of notoamide, a fungal indole alkaloid that belongs to a family of natural products containing a characteristic bicyclo[2.2.2]diazaoctane core. The polypeptide is Notoamide biosynthesis cluster transcriptional coactivator notQ' (Aspergillus versicolor).